Reading from the N-terminus, the 617-residue chain is Dihydroxy-acid dehydratase (617 aa).

D82 lines the Mg(2+) pocket. C123 lines the [2Fe-2S] cluster pocket. Mg(2+) is bound by residues D124 and K125. K125 bears the N6-carboxylysine mark. Position 197 (C197) interacts with [2Fe-2S] cluster. A Mg(2+)-binding site is contributed by E497. S523 functions as the Proton acceptor in the catalytic mechanism.

The protein belongs to the IlvD/Edd family. Homodimer. Requires [2Fe-2S] cluster as cofactor. It depends on Mg(2+) as a cofactor.

It carries out the reaction (2R)-2,3-dihydroxy-3-methylbutanoate = 3-methyl-2-oxobutanoate + H2O. It catalyses the reaction (2R,3R)-2,3-dihydroxy-3-methylpentanoate = (S)-3-methyl-2-oxopentanoate + H2O. It participates in amino-acid biosynthesis; L-isoleucine biosynthesis; L-isoleucine from 2-oxobutanoate: step 3/4. The protein operates within amino-acid biosynthesis; L-valine biosynthesis; L-valine from pyruvate: step 3/4. In terms of biological role, functions in the biosynthesis of branched-chain amino acids. Catalyzes the dehydration of (2R,3R)-2,3-dihydroxy-3-methylpentanoate (2,3-dihydroxy-3-methylvalerate) into 2-oxo-3-methylpentanoate (2-oxo-3-methylvalerate) and of (2R)-2,3-dihydroxy-3-methylbutanoate (2,3-dihydroxyisovalerate) into 2-oxo-3-methylbutanoate (2-oxoisovalerate), the penultimate precursor to L-isoleucine and L-valine, respectively. The polypeptide is Dihydroxy-acid dehydratase (Streptomyces avermitilis (strain ATCC 31267 / DSM 46492 / JCM 5070 / NBRC 14893 / NCIMB 12804 / NRRL 8165 / MA-4680)).